Here is a 250-residue protein sequence, read N- to C-terminus: Aquaporin TIP2-3 (250 aa).

M1 bears the N-acetylmethionine mark. Residues 1 to 24 lie on the Cytoplasmic side of the membrane; the sequence is MVKIEVGSVGDSFSVSSLKAYLSE. N6,N6-dimethyllysine is present on K3. A helical membrane pass occupies residues 25-45; sequence FIATLLFVFAGVGSAVAFAKL. Residues 46 to 54 lie on the Vacuolar side of the membrane; sequence TSDGALDPA. Residues 55-75 traverse the membrane as a helical segment; it reads GLVAIAIAHAFALFVGVSIAA. The Cytoplasmic segment spans residues 76–101; the sequence is NISGGHLNPAVTLGLAIGGNITLITG. Positions 83–85 match the NPA 1 motif; it reads NPA. The helical transmembrane segment at 102 to 122 threads the bilayer; the sequence is FFYWIAQCLGSIVACLLLVFV. The Vacuolar segment spans residues 123–134; it reads TNGKSVPTHGVS. A helical membrane pass occupies residues 135–155; that stretch reads AGLGAVEGVVMEIVVTFALVY. At 156–168 the chain is on the cytoplasmic side; that stretch reads TVYATAADPKKGS. The chain crosses the membrane as a helical span at residues 169–189; the sequence is LGTIAPIAIGFIVGANILAAG. At 190–217 the chain is on the vacuolar side; sequence PFSGGSMNPARSFGPAVVSGDLSQIWIY. Residues 197 to 199 carry the NPA 2 motif; sequence NPA. Residues 218–238 form a helical membrane-spanning segment; that stretch reads WVGPLVGGALAGLIYGDVFIG. The Cytoplasmic segment spans residues 239-250; it reads SYEAVETREIRV.

Belongs to the MIP/aquaporin (TC 1.A.8) family. TIP (TC 1.A.8.10) subfamily. In terms of assembly, interacts with cucumber mosaic virus (CMV) Protein 1a. Widely expressed.

Its subcellular location is the vacuole membrane. Its function is as follows. Transports methylammonium or ammonium in yeast cells, preferentially at high medium pH. May participate in vacuolar compartmentation and detoxification of ammonium. The protein is Aquaporin TIP2-3 (TIP2-3) of Arabidopsis thaliana (Mouse-ear cress).